The sequence spans 155 residues: Endoribonuclease YbeY (155 aa).

Zn(2+)-binding residues include His-114, His-118, and His-124.

Belongs to the endoribonuclease YbeY family. The cofactor is Zn(2+).

It localises to the cytoplasm. Its function is as follows. Single strand-specific metallo-endoribonuclease involved in late-stage 70S ribosome quality control and in maturation of the 3' terminus of the 16S rRNA. This Escherichia coli O6:K15:H31 (strain 536 / UPEC) protein is Endoribonuclease YbeY.